We begin with the raw amino-acid sequence, 23 residues long: Paralytic peptide 2 (23 aa).

A disulfide bond links Cys-7 and Cys-19.

It belongs to the GBP/PSP1/paralytic peptide family. As to expression, hemolymph.

Functionally, causes rapid, rigid paralysis when injected into Lepidopteran larvae. The physiological role may be to reduce hemolymph loss following injury and promote wound healing. The polypeptide is Paralytic peptide 2 (Spodoptera exigua (Beet armyworm)).